A 474-amino-acid chain; its full sequence is MSFTVAIVGRPNVGKSTLFNRLVGKKLALVDDTPGVTRDRRPGEAKLVDLRFHIVDTAGLEEAGADTLEGRMRAQTEIAIDEADLSLFVVDAKMGLTHVDKALADMLRKRGKPVVLVANKSEARGSDGGFYDAFTLGLGEPVPISAEHGQGMIDLRDAIVEAIGVDRAFPEDDDDVAETDIVLRPTVEGEDDEEDLAYDDTKPLRVAIVGRPNAGKSTLINRFLGEDRLLTGPEAGITRDSISVEWDWRGRTIKMFDTAGMRRKARVIEKLEKLSVADTLRAIRFAETVVIVFDATIPFEKQDIQIVDLVLREGRAAVLAFNKWDLVEDPQAVLAELREKTERLLPQARGIRAVPMAGQTGYGLEKLMQSIIDTDMVWNKRISTAKLNRWLDSVQTQHPPPAVSGRRLKLKYMTQVKARPPAFMISCTRPDSVPESYIRYLTNGLRADFNMPGVPIRIHLKASENPFENKRKRR.

2 EngA-type G domains span residues 3-167 (FTVA…GVDR) and 204-379 (LRVA…MVWN). GTP-binding positions include 9 to 16 (GRPNVGKS), 56 to 60 (DTAGL), 119 to 122 (NKSE), 210 to 217 (GRPNAGKS), 257 to 261 (DTAGM), and 322 to 325 (NKWD). The 85-residue stretch at 380–464 (KRISTAKLNR…PIRIHLKASE (85 aa)) folds into the KH-like domain.

This sequence belongs to the TRAFAC class TrmE-Era-EngA-EngB-Septin-like GTPase superfamily. EngA (Der) GTPase family. As to quaternary structure, associates with the 50S ribosomal subunit.

Functionally, GTPase that plays an essential role in the late steps of ribosome biogenesis. The polypeptide is GTPase Der (Allorhizobium ampelinum (strain ATCC BAA-846 / DSM 112012 / S4) (Agrobacterium vitis (strain S4))).